We begin with the raw amino-acid sequence, 500 residues long: Lysine--tRNA ligase (500 aa).

Mg(2+) contacts are provided by Glu-410 and Glu-417.

It belongs to the class-II aminoacyl-tRNA synthetase family. As to quaternary structure, homodimer. Requires Mg(2+) as cofactor.

The protein resides in the cytoplasm. It carries out the reaction tRNA(Lys) + L-lysine + ATP = L-lysyl-tRNA(Lys) + AMP + diphosphate. The chain is Lysine--tRNA ligase from Mycoplasma mycoides subsp. mycoides SC (strain CCUG 32753 / NCTC 10114 / PG1).